Consider the following 481-residue polypeptide: Transcription factor TGA9 (481 aa).

Positions 91 to 181 are disordered; the sequence is QTLPTESSKS…GKQLDAKTLR (91 aa). Positions 97–109 are enriched in low complexity; it reads SSKSGGESSDSGS. Residues 110–126 show a composition bias toward polar residues; it reads ANFSGKAESQQPESPMS. Over residues 143 to 155 the composition is skewed to low complexity; it reads SSSTSGLPSTSRT. A Nuclear localization signal motif is present at residues 165 to 172; that stretch reads KRKATTSG. A bZIP domain is found at 176 to 220; the sequence is DAKTLRRLAQNREAARKSRLRKKAYVQQLESSRIKLSQLEQELQR. Residues 178-198 form a basic motif region; the sequence is KTLRRLAQNREAARKSRLRKK. The tract at residues 204–218 is leucine-zipper; the sequence is LESSRIKLSQLEQEL. The region spanning 242-450 is the DOG1 domain; the sequence is AAIFDMEYGR…RALSSLWLSR (209 aa).

It belongs to the bZIP family. As to quaternary structure, homodimer. Binds DNA as a dimer. Interacts with floral glutaredoxins GRXC7/ROXY1 and GRXC8/ROXY2 in the nucleus. Interacts with TGA1, TGA2, TGA3, TGA4, TGA5, TGA6, TGA7, TGA10 and PAN. As to expression, mostly expressed in stems, inflorescence apex and flowers, and, to a lower extent, in seedlings, leaves and siliques.

Its subcellular location is the nucleus. In terms of biological role, together with TGA10, basic leucine-zipper transcription factor required for anther development, probably via the activation of SPL expression in anthers and via the regulation of genes with functions in early and middle tapetal development. Required for signaling responses to pathogen-associated molecular patterns (PAMPs) such as flg22 that involves chloroplastic reactive oxygen species (ROS) production and subsequent expression of H(2)O(2)-responsive genes. The chain is Transcription factor TGA9 from Arabidopsis thaliana (Mouse-ear cress).